The following is a 445-amino-acid chain: GTPase Der (445 aa).

2 EngA-type G domains span residues 3 to 167 (PVIA…YAGQ) and 180 to 353 (VKIA…AAAM). GTP is bound by residues 9 to 16 (GRPNVGKS), 56 to 60 (DTGGF), 119 to 122 (NKAE), 186 to 193 (GRPNVGKS), 233 to 237 (DTAGL), and 298 to 301 (NKWD). The 85-residue stretch at 354–438 (AKLPTPKLTR…PLRIEFRSST (85 aa)) folds into the KH-like domain.

Belongs to the TRAFAC class TrmE-Era-EngA-EngB-Septin-like GTPase superfamily. EngA (Der) GTPase family. As to quaternary structure, associates with the 50S ribosomal subunit.

Its function is as follows. GTPase that plays an essential role in the late steps of ribosome biogenesis. This is GTPase Der from Paraburkholderia phytofirmans (strain DSM 17436 / LMG 22146 / PsJN) (Burkholderia phytofirmans).